Consider the following 1604-residue polypeptide: Ubiquitin carboxyl-terminal hydrolase 32 (1604 aa).

EF-hand domains are found at residues 91–126 (KDEEKAKYIFSLFSSESGNYVIREEMERMLHVVDGK), 228–263 (IRPSLSEGLFNAFDENRDNHIDFKEISCGLSACCRG), and 264–299 (PLAERQKFCFKVFDVDRDGVLSRVELRDMVVALLEV). Residues Asp-241, Asn-243, Asp-245, His-247, Glu-252, Asp-277, Asp-279, Asp-281, and Glu-288 each coordinate Ca(2+). A DUSP domain is found at 369-585 (ATPEEEGQII…ANLALPRPVI (217 aa)). Residues 734 to 1567 (TGLSNLGNTC…SAYILFYEQQ (834 aa)) form the USP domain. Catalysis depends on Cys-743, which acts as the Nucleophile. Tyr-1173 bears the Phosphotyrosine mark. Disordered stretches follow at residues 1343–1362 (KKVDAQSSAGEEDVLLSKSP) and 1367–1431 (ANII…DASK). Residues Ser-1350, Ser-1372, Ser-1376, and Ser-1454 each carry the phosphoserine modification. A compositionally biased stretch (low complexity) spans 1367–1399 (ANIISSPKGSPSSSRKSGTSCPSSKNSSPNSSP). Catalysis depends on His-1526, which acts as the Proton acceptor. The residue at position 1588 (Ser-1588) is a Phosphoserine. Cysteine methyl ester is present on Cys-1601. Cys-1601 carries the S-farnesyl cysteine lipid modification. The propeptide at 1602–1604 (VLQ) is removed in mature form.

The protein belongs to the peptidase C19 family.

The protein localises to the golgi apparatus membrane. It carries out the reaction Thiol-dependent hydrolysis of ester, thioester, amide, peptide and isopeptide bonds formed by the C-terminal Gly of ubiquitin (a 76-residue protein attached to proteins as an intracellular targeting signal).. Deubiquitinase that can remove conjugated ubiquitin from target proteins, such as RAB7A and LAMTOR1. Acts as a positive regulator of the mTORC1 signaling by mediating deubiquitination of LAMTOR1, thereby promoting the association between LAMTOR1 and the lysosomal V-ATPase complex and subsequent activation of the mTORC1 complex. The sequence is that of Ubiquitin carboxyl-terminal hydrolase 32 (USP32) from Homo sapiens (Human).